Reading from the N-terminus, the 301-residue chain is uncharacterized protein (301 aa).

Thr-47 serves as the catalytic Charge relay system. Catalysis depends on Tyr-136, which acts as the Proton donor. Catalysis depends on Lys-165, which acts as the Schiff-base intermediate with substrate.

The protein belongs to the DapA family. Homotetramer.

The protein resides in the cytoplasm. This is an uncharacterized protein from Thermofilum pendens (strain DSM 2475 / Hrk 5).